The following is a 318-amino-acid chain: uncharacterized protein (318 aa).

This sequence belongs to the NAD(P)-dependent epimerase/dehydratase family.

This is an uncharacterized protein from Staphylococcus haemolyticus (strain JCSC1435).